The primary structure comprises 2850 residues: MLRVRQLLLLLLFRGPLIDAGAWTGDVTDSDTEDNLQSSPEKGWCSTWGAGHFSTFDGHEYNFQGMCNYIFTATCGDDVPATFSIQLRRDMEGNISRIIMELGASVVTVNKETISVRDIGVVSLPYTSNGLQITPYGQSVQLVAKQLELELVITWGPDAHLTEGQGGDEVGTPGTLKQESKGSPAWAGSSLCIPTETNSTTPQVQVETKYMGKLCGLCGNFDGKIDNEFLSEDGKLLEAHKYATLQKLDDPNEICAHEAIPSTIILKTRYAQICNQLLTLVSPGCDVPKETLMLSCQADMAACARPGQPNCSCATLSEYSRRCSMTGQPVRNWRTPALCPMSQCPANQVYQECGEVCIKTCSNPQHSCSSPCTFGCFCPHGTLLDDISGNQSCVPVNQCPCMLNGMVYGPGEITKTACQTCQCTMGRWTCTKQPCPGHCSLEGGSFVTTFDARPYRFHGTCTYTLLQSPQLPNEGTLMAVYDKSGYSHSETSLVAIMYLSKKDKIVISEDEVITNNGDTKLLPYKTHNITIFRQTSTHLQMATTFGLELVFQMQPVFQVYITVGPQFKGQTRGLCGNFNGDTTDDFTTSMGIDEGTASLFVDSWRAGNCPAALEREMDPCSMSQLNKVCAETHCSMLLKKGSVFEKCHSVVNPQPFYKRCVYQACNYEETFPHICSALGAYAHACSARGILLWGWRNSVDNCTVPCTGNRTFSYDSQACDRTCLSLSDRETECHVSPVPVDGCNCPEGTYLNHKAECVHKAQCPCLLDDYKFVQADQSTMINGVICHCINGRLSCPRQAEMFFASCPEPKTFQSCSQSSEDKFGAACAPTCQMLATGIDCVPTKCESGCVCPKGLYENSDGQCVPAEECPCDYAGVSYPGGFELHTDCKTCTCSQGRWTCQLSTQCPSTCVLYGEGHIITFDGQRFVFDGDCEYMLATDDCGANSSQPTFKVLTENVICGKSGVTCSRAIKISLGGLFITMADSNYTVSGEEPLVHLKVKPSPLNLVLDIDIPGRLNLTLVWNKHMSVSIKIRRATQDALCGLCGNANGNMKDDFETRSKYVASNELEFVNSWKESPLCGDASYAVDPCSLNTFRRSWAERKCNIINSQTFAACHSKVYHLPYYEACVRDACGCDTGGDCECLCDAVAAYAKACLDKGVCVDWRTPDFCPIYCDFYNTHTLVGENEYQYAQESNCTWHYQPCLCPGSLGSFPDTNTEGCYNCSQNEYFDHSEGTCVPCAPPTTTLPPTTTGSQPTTETTISTEFHSSTSANTPVAPSYLPGLPTPPPSAPSSTEELTVWTTPKESTVSSGEYPQTTMAATPPTSPWPPTSIPKSTPTELPVTQATSKPTASSLSSSTKTTAELTESTTVTLLTLMPGMSTSQEGTPTSKIPVTQTTTHRVPSRCITNQSTTMFQTTTVQEAEITQTLAPSTYTTNDITKTQNLFSTAPHLSETSAVTAHQSTPTAVSANSIKPTMSSTGTPVVHTTSGTSSSPQTPRTTHPSTTVAVSGTVHTTGLPSGTSVHTTTNFPTHSGPQSSLSTHLPLFSTLSVTPTTEGLNTQSTPIPAITNSLMTTGGLTGTPPVHTTSGTTSSPQTPRTTHPFSTVAVSNTKHTTGVSLETSVQTTIASPTPSAPQTSLATHLPFSSTSSVTPTSEVIITPTPQHTLSSASTSTTTGNILPTTIGKTGSPHTSVPVIYTTSAITQTKTSFSTDRTSTSTSAPHLSETSAVTAHQSTPTAVSANSIKPTMSSTGTPVVHTTSGTTSSPQTPRTTHPSTTVAVSGTVHTTGLPSGTSVHTTTNFPTHSGPQSSLSTHLPLFSTLSVTPTTEGLNTPTSPHSLSVASTSMPLMTVLPTTLEGTRPPHTSVPVTYTTTAATQTKSSFSTDRTSAPHLSQPSTVTPTQSTPIPATTNSLMTTGGLTGTPPVHTTSGTTSSPQTPRTTHPFSTVAVSNTKHTTGVSLETSVQTTIASPTPSAPQTSLATHLPFSSTSSVTPTSEVIITPTPQHTLSSASTSTTTGNILPTTIGQTGSPHTSVPVIYTTSAITQTKTSFSTDRTSTSTSAPHLSETSAVTAHQSTPTAVSANSIKPTMSSTGTPVVHTTSGTTSSPQTPRTTHPSTTVAVSGTVHTTGLPSGTSVHTTTNFPTHSGPQSSLSTHLPLFSTLSVTPTTEGLNTPTSPHSLSAASTSMPLMTVLPTTLEGTRPPHTSVPVTYTTTAATQTKSSFSTDRTSTPHLSQSSTVTPTQPTPIPATTNSPMTTVGLTGTPVVHTPSGTSSIAHTPHTTHSLPTAASSSTTLSTAPQFRTSEQSTTTFPTPSAPQTSLVTSLPPFSTSSVSPTDEIHITSTNPHTVSSVSMSRPVSTILQTTIEVTTPPNTSTPVTHSTSATTEAQGSFSTERTSTSYLSHPSSTTVHQSTAGPVITSIKSTMGVTGTPPVHTTSGTTSSPQTPHSTHPISTAAISRTTGISGTPFRTPMKTTITFPTPSSLQTSMATLFPPFSTSVMSSTEIFNTPTNPHSVSSASTSRPLSTSLPTTIKGTGTPQTPVSDINTTSATTQAHSSFPTTRTSTSHLSLPSSMTSTLTPASRSASTLQYTPTPSSVSHSPLLTTPTASPPSSAPTFVSPTAASTVISSALPTIHMTPTPSSRPTSSTGLLSTSKTTSHVPTFSSFSSKSTTAHLTSLTTQAATSGLLSSTMGMTNLPSSGSPDINHTTRPPGSSPLPTSAFLSRSTSPTGSSSPSTPVSSSNPDSSVSSPPSHPGTCSLQEEEHQITYQGCVANVTLTRCQGFCASSVSFNKDTLQLESSCGCCQPLSTYKKQLSLPCPDPDAPGQQLTLTLQVFSSCVCSPLQCKN.

The first 22 residues, 1–22 (MLRVRQLLLLLLFRGPLIDAGA), serve as a signal peptide directing secretion. The region spanning 43–256 (GWCSTWGAGH…KLDDPNEICA (214 aa)) is the VWFD 1 domain. 2 cysteine pairs are disulfide-bonded: Cys45–Cys218 and Cys67–Cys255. Asn94 carries N-linked (GlcNAc...) asparagine glycosylation. The segment at 160–183 (HLTEGQGGDEVGTPGTLKQESKGS) is disordered. N-linked (GlcNAc...) asparagine glycosylation is present at Asn310. The region spanning 344-399 (CPANQVYQECGEVCIKTCSNPQHSCSSPCTFGCFCPHGTLLDDISGNQSCVPVNQC) is the TIL 1 domain. A VWFD 2 domain is found at 437–621 (GHCSLEGGSF…ALEREMDPCS (185 aa)). Intrachain disulfides connect Cys439–Cys575 and Cys461–Cys620. N-linked (GlcNAc...) asparagine glycosylation is found at Asn528 and Asn701. Positions 806 to 869 (CPEPKTFQSC…DGQCVPAEEC (64 aa)) constitute a TIL 2 domain. The region spanning 908-1080 (STCVLYGEGH…NSWKESPLCG (173 aa)) is the VWFD 3 domain. Intrachain disulfides connect Cys910/Cys1044, Cys932/Cys1079, Cys941/Cys1041, and Cys959/Cys966. Residues Asn1017 and Asn1221 are each glycosylated (N-linked (GlcNAc...) asparagine). Positions 1263–1281 (EFHSSTSANTPVAPSYLPG) are enriched in low complexity. Disordered regions lie at residues 1263–1363 (EFHS…TAEL), 1377–1400 (GMSTSQEGTPTSKIPVTQTTTHRV), 1466–1504 (VSANSIKPTMSSTGTPVVHTTSGTSSSPQTPRTTHPSTT), 1580–1600 (TPPVHTTSGTTSSPQTPRTTH), 1626–1650 (IASPTPSAPQTSLATHLPFSSTSSV), 1705–1813 (TKTS…SLST), 1877–1942 (QTKS…RTTH), 1968–1992 (IASPTPSAPQTSLATHLPFSSTSSV), 2049–2119 (TSFS…PSTT), 2219–2254 (QTKSSFSTDRTSTPHLSQSSTVTPTQPTPIPATTNS), 2276–2295 (IAHTPHTTHSLPTAASSSTT), 2306–2338 (EQSTTTFPTPSAPQTSLVTSLPPFSTSSVSPTD), 2370–2473 (TTPP…FRTP), 2511–2621 (PTNP…TFVS), 2634–2674 (PTIH…KSTT), and 2692–2761 (STMG…GTCS). Over residues 1294 to 1312 (EELTVWTTPKESTVSSGEY) the composition is skewed to polar residues. Positions 1345–1363 (TSKPTASSLSSSTKTTAEL) are enriched in low complexity. Polar residues-rich tracts occupy residues 1378-1399 (MSTSQEGTPTSKIPVTQTTTHR) and 1466-1484 (VSANSIKPTMSSTGTPVVH). A run of 8 repeats spans residues 1440 to 1555 (TQNL…PTTE), 1556 to 1712 (GLNT…FSTD), 1713 to 1885 (RTST…FSTD), 1886 to 2054 (RTSA…FSTD), 2055 to 2227 (RTST…FSTD), 2228 to 2396 (RTST…FSTE), 2397 to 2563 (RTST…FPTT), and 2564 to 2671 (RTST…FSSK). Residues 1440-2671 (TQNLFSTAPH…VPTFSSFSSK (1232 aa)) are approximate repeats. The span at 1485–1504 (TTSGTSSSPQTPRTTHPSTT) shows a compositional bias: low complexity. A compositionally biased stretch (polar residues) spans 1626 to 1639 (IASPTPSAPQTSLA). A compositionally biased stretch (low complexity) spans 1705–1719 (TKTSFSTDRTSTSTS). The span at 1720–1757 (APHLSETSAVTAHQSTPTAVSANSIKPTMSSTGTPVVH) shows a compositional bias: polar residues. The span at 1758–1777 (TTSGTTSSPQTPRTTHPSTT) shows a compositional bias: low complexity. Over residues 1778–1813 (VAVSGTVHTTGLPSGTSVHTTTNFPTHSGPQSSLST) the composition is skewed to polar residues. Low complexity predominate over residues 1893–1942 (SQPSTVTPTQSTPIPATTNSLMTTGGLTGTPPVHTTSGTTSSPQTPRTTH). Positions 1968-1981 (IASPTPSAPQTSLA) are enriched in polar residues. The span at 2049–2061 (TSFSTDRTSTSTS) shows a compositional bias: low complexity. Polar residues predominate over residues 2062–2099 (APHLSETSAVTAHQSTPTAVSANSIKPTMSSTGTPVVH). Over residues 2100–2119 (TTSGTTSSPQTPRTTHPSTT) the composition is skewed to low complexity. Residues 2227–2238 (DRTSTPHLSQSS) are compositionally biased toward polar residues. Residues 2282 to 2295 (TTHSLPTAASSSTT) are compositionally biased toward low complexity. Positions 2370-2384 (TTPPNTSTPVTHSTS) are enriched in low complexity. A compositionally biased stretch (polar residues) spans 2385–2429 (ATTEAQGSFSTERTSTSYLSHPSSTTVHQSTAGPVITSIKSTMGV). The segment covering 2436–2456 (HTTSGTTSSPQTPHSTHPIST) has biased composition (low complexity). A compositionally biased stretch (polar residues) spans 2457–2466 (AAISRTTGIS). Positions 2516–2533 (SVSSASTSRPLSTSLPTT) are enriched in low complexity. Polar residues predominate over residues 2534-2560 (IKGTGTPQTPVSDINTTSATTQAHSSF). Residues 2561-2584 (PTTRTSTSHLSLPSSMTSTLTPAS) are compositionally biased toward low complexity. Residues 2585-2601 (RSASTLQYTPTPSSVSH) show a composition bias toward polar residues. Low complexity predominate over residues 2639 to 2674 (TPTPSSRPTSSTGLLSTSKTTSHVPTFSSFSSKSTT). Residues 2692–2725 (STMGMTNLPSSGSPDINHTTRPPGSSPLPTSAFL) show a composition bias toward polar residues. The span at 2726 to 2759 (SRSTSPTGSSSPSTPVSSSNPDSSVSSPPSHPGT) shows a compositional bias: low complexity. 4 disulfide bridges follow: Cys2760-Cys2807, Cys2774-Cys2821, Cys2783-Cys2841, and Cys2787-Cys2843. A CTCK domain is found at 2760-2849 (CSLQEEEHQI…SCVCSPLQCK (90 aa)).

Multimer; disulfide-linked. O-glycosylated. Expressed in stomach, duodenum and small intestine.

It localises to the secreted. Functionally, may provide a mechanism for modulation of the composition of the protective mucus layer related to acid secretion or the presence of bacteria and noxious agents in the lumen. Plays an important role in the cytoprotection of epithelial surfaces and are used as tumor markers in a variety of cancers. May play a role in epithelial organogenesis. This Mus musculus (Mouse) protein is Mucin-6 (Muc6).